The primary structure comprises 434 residues: Alpha-enolase (434 aa).

S40 provides a ligand contact to Mg(2+). Positions 158 and 167 each coordinate substrate. Catalysis depends on E210, which acts as the Proton donor. 3 residues coordinate Mg(2+): D245, E293, and D318. Substrate is bound by residues E293 and D318. The active-site Proton acceptor is the K343. Substrate-binding positions include 370 to 373 (SHRS) and K394.

This sequence belongs to the enolase family. As to quaternary structure, homodimer. Requires Mg(2+) as cofactor.

It localises to the cytoplasm. It carries out the reaction (2R)-2-phosphoglycerate = phosphoenolpyruvate + H2O. Its pathway is carbohydrate degradation; glycolysis; pyruvate from D-glyceraldehyde 3-phosphate: step 4/5. The polypeptide is Alpha-enolase (Python regius (Ball python)).